The chain runs to 107 residues: Nucleoid-associated protein R00231 (107 aa).

Belongs to the YbaB/EbfC family. In terms of assembly, homodimer.

It localises to the cytoplasm. It is found in the nucleoid. Functionally, binds to DNA and alters its conformation. May be involved in regulation of gene expression, nucleoid organization and DNA protection. This chain is Nucleoid-associated protein R00231, found in Rhizobium meliloti (strain 1021) (Ensifer meliloti).